We begin with the raw amino-acid sequence, 464 residues long: Rhodopsin (464 aa).

The Extracellular portion of the chain corresponds to 1-33 (MGRDIPDNETWWYNPTMEVHPHWKQFNQVPDAV). N-linked (GlcNAc...) asparagine glycosylation is present at N8. The helical transmembrane segment at 34-58 (YYSLGIFIGICGIIGCTGNGIVIYL) threads the bilayer. Residues 59 to 70 (FTKTKSLQTPAN) are Cytoplasmic-facing. Residues 71 to 97 (MFIINLAFSDFTFSLVNGFPLMTISCF) form a helical membrane-spanning segment. The Extracellular segment spans residues 98–109 (IKKWVFGMAACK). An intrachain disulfide couples C108 to C186. Residues 110–131 (VYGFIGGIFGLMSIMTMSMISI) traverse the membrane as a helical segment. The 'Ionic lock' involved in activated form stabilization signature appears at 132–134 (DRY). Over 132–151 (DRYNVIGRPMAASKKMSHRR) the chain is Cytoplasmic. Residues 152 to 172 (AFLMIIFVWMWSTLWSIGPIF) traverse the membrane as a helical segment. Over 173–199 (GWGAYVLEGVLCNCSFDYITRDSATRS) the chain is Extracellular. Residues 200-224 (NIVCMYIFAFCFPILIIFFCYFNIV) form a helical membrane-spanning segment. The Cytoplasmic portion of the chain corresponds to 225-261 (MAVSNHEKEMAAMAKRLNAKELRKAQAGASAEMKLAK). A helical transmembrane segment spans residues 262–283 (ISIVIVTQFLLSWSPYAVVALL). Over 284 to 293 (AQFGPIEWVT) the chain is Extracellular. The helical transmembrane segment at 294–315 (PYAAQLPVMFAKASAIHNPLIY) threads the bilayer. Residue K305 is modified to N6-(retinylidene)lysine. Residues 316–464 (SVSHPKFREA…QGVDNQAYQA (149 aa)) lie on the Cytoplasmic side of the membrane. S-palmitoyl cysteine attachment occurs at residues C336 and C337. Positions 344 to 464 (VEDDKDAETE…QGVDNQAYQA (121 aa)) are disordered. The span at 367–401 (AAQMKEMMAMMQKMQQQQAAYPPQGAYPPQGGYPP) shows a compositional bias: low complexity. Pro residues-rich tracts occupy residues 416–425 (QGYPPPPQGY) and 434–452 (QGYP…PQAA).

The protein belongs to the G-protein coupled receptor 1 family. Opsin subfamily. Post-translationally, contains one covalently linked retinal chromophore. Upon light absorption, the covalently bound 11-cis-retinal is converted to all-trans-retinal. After hydrolysis of the Schiff base and release of the covalently bound all-trans-retinal, active rhodopsin is regenerated by binding of a fresh molecule of 11-cis-retinal.

The protein resides in the cell projection. It localises to the rhabdomere membrane. Functionally, photoreceptor required for image-forming vision at low light intensity. Light-induced isomerization of 11-cis to all-trans retinal triggers a conformational change that activates signaling via G-proteins. Signaling mediates the activation of phospholipase C. Subsequent receptor phosphorylation mediates displacement of the bound G-protein alpha subunit by arrestin and terminates signaling. The sequence is that of Rhodopsin (RHO) from Sepia officinalis (Common cuttlefish).